The following is a 577-amino-acid chain: Cytidine monophosphate-N-acetylneuraminic acid hydroxylase (577 aa).

A propeptide spanning residues 1-4 (MMDR) is cleaved from the precursor. Residues 14 to 112 (LSPAEVANLK…IEMDENNGLS (99 aa)) form the Rieske domain. [2Fe-2S] cluster contacts are provided by Cys54, His56, Cys75, and His78.

This sequence belongs to the CMP-Neu5Ac hydroxylase family. The cofactor is [2Fe-2S] cluster. As to expression, expressed in all tissues tested, except in brain.

It localises to the cytoplasm. Its subcellular location is the endoplasmic reticulum. It carries out the reaction CMP-N-acetyl-beta-neuraminate + 2 Fe(II)-[cytochrome b5] + O2 + 2 H(+) = CMP-N-glycoloyl-beta-neuraminate + 2 Fe(III)-[cytochrome b5] + H2O. It participates in amino-sugar metabolism; N-acetylneuraminate metabolism. In terms of biological role, sialic acids are components of carbohydrate chains of glycoconjugates and are involved in cell-cell recognition and cell-pathogen interactions. Catalyzes the conversion of CMP-N-acetylneuraminic acid (CMP-Neu5Ac) into its hydroxylated derivative CMP-N-glycolylneuraminic acid (CMP-Neu5Gc), a sialic acid abundantly expressed at the surface of many cells. The protein is Cytidine monophosphate-N-acetylneuraminic acid hydroxylase (Cmah) of Mus musculus (Mouse).